A 178-amino-acid polypeptide reads, in one-letter code: MELENFKGQNKNELSMIEVAHAILAKSGEPMAFVDLANAVQSYLDKTDEEFRNRLSQFYTDLNVDGSFISLGENTWGLRTWYPFESIDEALIHAEDEDEDRPVRKKRKKVNAFLADAADDDDVIDYDSDDPEDEEVEAEDTTSDDAPAFEDLSNDDDTDVLPDGIEGQLSELNEDDEN.

Residues L14–W81 form the HTH HARE-type domain. Positions D120–S143 are enriched in acidic residues. Positions D120–N178 are disordered.

This sequence belongs to the RpoE family. RNAP is composed of a core of 2 alpha, a beta and a beta' subunits. The core is associated with a delta subunit and one of several sigma factors.

Participates in both the initiation and recycling phases of transcription. In the presence of the delta subunit, RNAP displays an increased specificity of transcription, a decreased affinity for nucleic acids, and an increased efficiency of RNA synthesis because of enhanced recycling. This Pediococcus pentosaceus (strain ATCC 25745 / CCUG 21536 / LMG 10740 / 183-1w) protein is Probable DNA-directed RNA polymerase subunit delta.